A 319-amino-acid chain; its full sequence is Proline hydroxylase buaE (319 aa).

In terms of domain architecture, Fe2OG dioxygenase spans 168 to 280 (NSSELRLNHY…RYSIAYFGKP (113 aa)). Residues His195, Asp197, and His255 each coordinate Fe cation. Arg271 lines the 2-oxoglutarate pocket.

Belongs to the iron/ascorbate-dependent oxidoreductase family. It depends on Fe(2+) as a cofactor.

It functions in the pathway mycotoxin biosynthesis. Functionally, proline hydroxylase; part of the gene cluster that mediates the biosynthesis of burnettramic acids, an unusual class of bolaamphiphilic pyrrolizidinediones that display potent antibacterial, antifungal, and cytotoxic activities. The first step of the biosynthesis of burnettramic acids is the hydroxylation of proline by the proline hydroxylase buaE to generate 4-hydroxyproline. The PKS-NRPS buaA and trans-enoyl reductase buaC construct the highly reduced polyketide chain, and the condensation (C) domain of buaA then catalyzes the amide bond formation with the activated 4-hydroxyproline. This is followed by the R domain releasing the nascent polyketide-peptide directly via a Dieckmann condensation to afford a tetramic acid fused to the hydroxyproline, generating the bicyclic pyrrolidinedione moiety. The cytochrome P450 monooxygenases buaD and buaG are likely responsible for the multiple hydroxylations on the polyketide chain and its terminus, although in the heterologous context, buaD does not appear to be required. Therefore, while buaG may be a multifunctional cytochrome P450 monooxygenase, it cannot be ruled out that the two secondary alcohols on the polyketide chain could have an acetate origin. Finally, the glycosyltransferase buaB transfers beta-D-mannose to the aglycone burnettramic acid A to form burnettramic acid A. Burnettramic acid B is a minor cis-pyrrolizidine epimer of burnettramic acid A and it is likely that small amounts of it form naturally in acidic environments. This chain is Proline hydroxylase buaE, found in Petromyces alliaceus (Aspergillus alliaceus).